Here is a 132-residue protein sequence, read N- to C-terminus: Homeobox protein HD-4 (132 aa).

Positions 29–88 form a DNA-binding region, homeobox; sequence GLSGYRYKTHIQVYVLTKIFEITQYPSHDTRQNLAILLNMSPRTIQIWFQNSRSVSRGAA. Residues 82–101 are disordered; sequence SVSRGAAKKKVSKDNGPQEA.

The protein localises to the nucleus. The polypeptide is Homeobox protein HD-4 (HD-4) (Encephalitozoon cuniculi (strain GB-M1) (Microsporidian parasite)).